The primary structure comprises 513 residues: Aspartyl protease family protein 1 (513 aa).

The N-terminal stretch at Met1 to Ser21 is a signal peptide. Positions His104–Lys445 constitute a Peptidase A1 domain. Active-site residues include Asp122 and Asp327. A disordered region spans residues Gly452 to Asn488. The segment covering Ser455–Ser474 has biased composition (low complexity). Residue Ser484 is the site of GPI-anchor amidated serine attachment. Positions Gln485–Leu513 are cleaved as a propeptide — removed in mature form.

This sequence belongs to the peptidase A1 family.

The protein localises to the cell membrane. Its function is as follows. Aspartyl protease. Not able to cleave BAG6. The sequence is that of Aspartyl protease family protein 1 from Arabidopsis thaliana (Mouse-ear cress).